Reading from the N-terminus, the 555-residue chain is Inositol 1,4,5-triphosphate receptor associated 2 (555 aa).

Residues 1 to 495 (MESTPFSGVA…LKSSIRKANK (495 aa)) are Cytoplasmic-facing. Disordered stretches follow at residues 84–103 (SLPLPRHTSSTDGTITSSDP) and 128–147 (RSASPTIEAQGTSPAHDNIA). Thr-91 carries the phosphothreonine modification. A compositionally biased stretch (low complexity) spans 91 to 102 (TSSTDGTITSSD). The span at 129–142 (SASPTIEAQGTSPA) shows a compositional bias: polar residues. Residues 227–341 (TLEKRVKLEE…LEELKQVLLQ (115 aa)) adopt a coiled-coil conformation. Phosphoserine occurs at positions 363, 370, and 424. Positions 437 to 469 (ELKTKDDSEPSGEETVERTRKPSLSEKKNNPSK) are disordered. Residues 451 to 465 (TVERTRKPSLSEKKN) are compositionally biased toward basic and acidic residues. A helical; Anchor for type IV membrane protein membrane pass occupies residues 496 to 516 (ALWLSIAFIVLFAALMSFLTG). The Lumenal portion of the chain corresponds to 517–555 (QLFQKSVDAAPTQQEDSWTSLEHILWPFTRLRHNGPPPV).

The protein belongs to the IRAG2 family. Interacts (via coiled-coil domain) with ITPR3. Interacts with SUN1 and SUN2. Interacts with microtubules. Interacts with HCN4; regulates HCN4 channel activity. The removal of the C-terminal lumenal domain occurs by proteolytic processing. Expressed at high levels in pre B-cells, mature B-cells and pre T-cells. Expressed at low levels in mature T-cells and plasma B-cells. Expressed in germinal center B-cells, splenic marginal zone cells and B-cell lymphomas. Expressed in neuronal cells in the cerebral cortex, epithelial cells in tonsil, adrenal glands, zymogen-producing cells in the stomach and epithelial cells in seminal vesicles.

Its subcellular location is the cytoplasm. The protein localises to the endoplasmic reticulum membrane. The protein resides in the nucleus envelope. It is found in the cytoskeleton. It localises to the microtubule organizing center. Its subcellular location is the centrosome. The protein localises to the spindle pole. The protein resides in the chromosome. Plays a role in the delivery of peptides to major histocompatibility complex (MHC) class I molecules; this occurs in a transporter associated with antigen processing (TAP)-independent manner. May play a role in taste signal transduction via ITPR3. May play a role during fertilization in pronucleus congression and fusion. Plays a role in maintaining nuclear shape, maybe as a component of the LINC complex and through interaction with microtubules. Plays a role in the regulation of cellular excitability by regulating the hyperpolarization-activated cyclic nucleotide-gated HCN4 channel activity. The sequence is that of Inositol 1,4,5-triphosphate receptor associated 2 from Homo sapiens (Human).